The chain runs to 155 residues: 2-C-methyl-D-erythritol 2,4-cyclodiphosphate synthase (155 aa).

A divalent metal cation contacts are provided by aspartate 8 and histidine 10. 4-CDP-2-C-methyl-D-erythritol 2-phosphate-binding positions include 8-10 (DVH) and 34-35 (HS). Histidine 42 lines the a divalent metal cation pocket. 4-CDP-2-C-methyl-D-erythritol 2-phosphate-binding positions include 56–58 (DIG), 61–65 (FPDSD), 100–106 (AQKPKML), 132–135 (TTEE), phenylalanine 139, and lysine 142.

This sequence belongs to the IspF family. As to quaternary structure, homotrimer. Requires a divalent metal cation as cofactor.

The catalysed reaction is 4-CDP-2-C-methyl-D-erythritol 2-phosphate = 2-C-methyl-D-erythritol 2,4-cyclic diphosphate + CMP. It participates in isoprenoid biosynthesis; isopentenyl diphosphate biosynthesis via DXP pathway; isopentenyl diphosphate from 1-deoxy-D-xylulose 5-phosphate: step 4/6. Functionally, involved in the biosynthesis of isopentenyl diphosphate (IPP) and dimethylallyl diphosphate (DMAPP), two major building blocks of isoprenoid compounds. Catalyzes the conversion of 4-diphosphocytidyl-2-C-methyl-D-erythritol 2-phosphate (CDP-ME2P) to 2-C-methyl-D-erythritol 2,4-cyclodiphosphate (ME-CPP) with a corresponding release of cytidine 5-monophosphate (CMP). In Clostridium botulinum (strain Okra / Type B1), this protein is 2-C-methyl-D-erythritol 2,4-cyclodiphosphate synthase.